Reading from the N-terminus, the 145-residue chain is DNA polymerase epsilon subunit 3 (145 aa).

Position 2 is an N-acetylalanine (alanine 2). Threonine 83 carries the phosphothreonine modification. Residues 85 to 144 adopt a coiled-coil conformation; that stretch reads LKEALEAYRREQKGKKEASEQKKKDKDKKDCEEQDKSREEEDEDEERLDEEEQNEEEEVD. A compositionally biased stretch (basic and acidic residues) spans 93–123; that stretch reads RREQKGKKEASEQKKKDKDKKDCEEQDKSRE. The segment at 93–145 is disordered; the sequence is RREQKGKKEASEQKKKDKDKKDCEEQDKSREEEDEDEERLDEEEQNEEEEVDN. Position 121 is a phosphoserine (serine 121). The segment covering 124–145 has biased composition (acidic residues); the sequence is EEDEDEERLDEEEQNEEEEVDN.

In terms of assembly, component of the DNA polymerase epsilon complex consisting of four subunits: the catalytic subunit POLE and the accessory subunits POLE2, POLE3 and POLE4. Interaction with POLE4 is a prerequisite for further binding with POLE and POLE2. Heterodimer with CHRAC1; binds to DNA. Component of the CHRAC ISWI chromatin remodeling complex at least composed of SMARCA5/SNF2H, BAZ1A/ACF1, CHRAC1 and POLE3; the complex preferentially binds DNA through the CHRAC1-POLE3 heterodimer and possesses ATP-dependent nucleosome-remodeling activity. Within the complex, the heterodimer with CHRAC1 interacts with SMARCA5/SNF2H; the interaction is direct and enhances nucleosome sliding activity by the SMARCA5/SNF2H and BAZ1A/ACF1 interaction. Within the complex, the heterodimer with CHRAC1 interacts with BAZ1A/ACF1; the interactions are direct.

It is found in the nucleus. Its function is as follows. Accessory component of the DNA polymerase epsilon complex. Participates in DNA repair and in chromosomal DNA replication. Forms a complex with CHRAC1 and binds naked DNA, which is then incorporated into chromatin, aided by the nucleosome-remodeling activity of ISWI/SNF2H and ACF1. Does not enhance nucleosome sliding activity of the ACF-5 ISWI chromatin remodeling complex. This Rattus norvegicus (Rat) protein is DNA polymerase epsilon subunit 3 (Pole3).